Reading from the N-terminus, the 82-residue chain is MCLRSHFKVAFTQRKVELSKELRRSRSSRNGGLPLQEQPMGQKWGWHRGEPGHPRMEELNEWPQNGDHWSRKWPPPCAFTPG.

The segment at 22 to 82 is disordered; sequence LRRSRSSRNG…WPPPCAFTPG (61 aa). A compositionally biased stretch (basic and acidic residues) spans 47-58; the sequence is HRGEPGHPRMEE. Residues 73–82 are compositionally biased toward pro residues; sequence WPPPCAFTPG.

This is an uncharacterized protein from Homo sapiens (Human).